We begin with the raw amino-acid sequence, 130 residues long: uncharacterized protein (130 aa).

A disordered region spans residues 41–64 (DDKDDHMDNQPKTSQTSKKVKLSE).

This is an uncharacterized protein from Streptococcus pyogenes serotype M6 (strain ATCC BAA-946 / MGAS10394).